Here is a 123-residue protein sequence, read N- to C-terminus: Probable non-functional immunoglobulin lambda variable 11-55 (123 aa).

The first 19 residues, 1–19, serve as a signal peptide directing secretion; it reads MALTPLLLLLLSHCTGSLS. The framework-1 stretch occupies residues 20–44; sequence RPVLTQPPSLSASPGATARLPCTLS. Residues 21–123 enclose the Ig-like domain; the sequence is PVLTQPPSLS…YCQVYESSAN (103 aa). Cys41 and Cys115 are disulfide-bonded. A complementarity-determining-1 region spans residues 45–53; sequence SDLSVGGKN. Positions 54–70 are framework-2; it reads MFWYQQKLGSSPRLFLY. A complementarity-determining-2 region spans residues 71–77; sequence HYSDSDK. Residues 78–115 are framework-3; that stretch reads QLGPGVPSRVSGSKETSSNTAFLLISGLQPEDEADYYC. The complementarity-determining-3 stretch occupies residues 116-123; the sequence is QVYESSAN.

Immunoglobulins are composed of two identical heavy chains and two identical light chains; disulfide-linked.

Its subcellular location is the secreted. The protein resides in the cell membrane. In terms of biological role, probable non-functional open reading frame (ORF) of V region of the variable domain of immunoglobulin light chains. Non-functional ORF generally cannot participate in the synthesis of a productive immunoglobulin chain due to altered V-(D)-J or switch recombination and/or splicing site (at mRNA level) and/or conserved amino acid change (protein level). Immunoglobulins, also known as antibodies, are membrane-bound or secreted glycoproteins produced by B lymphocytes. In the recognition phase of humoral immunity, the membrane-bound immunoglobulins serve as receptors which, upon binding of a specific antigen, trigger the clonal expansion and differentiation of B lymphocytes into immunoglobulins-secreting plasma cells. Secreted immunoglobulins mediate the effector phase of humoral immunity, which results in the elimination of bound antigens. The antigen binding site is formed by the variable domain of one heavy chain, together with that of its associated light chain. Thus, each immunoglobulin has two antigen binding sites with remarkable affinity for a particular antigen. The variable domains are assembled by a process called V-(D)-J rearrangement and can then be subjected to somatic hypermutations which, after exposure to antigen and selection, allow affinity maturation for a particular antigen. In Homo sapiens (Human), this protein is Probable non-functional immunoglobulin lambda variable 11-55.